A 160-amino-acid chain; its full sequence is Fimbrial protein (160 aa).

Residues 1 to 7 constitute a propeptide, leader sequence; that stretch reads MKSLQKG. F8 is modified (N-methylphenylalanine). Residues 8 to 28 traverse the membrane as a helical segment; it reads FTLIELMIVVAIIGILAAFAI.

The protein belongs to the N-Me-Phe pilin family. As to quaternary structure, the pili are polar flexible filaments of about 5.4 nanometers diameter and 2.5 micrometers average length; they consist of only a single polypeptide chain arranged in a helical configuration of five subunits per turn in the assembled pilus.

Its subcellular location is the fimbrium. It is found in the membrane. This Dichelobacter nodosus (Bacteroides nodosus) protein is Fimbrial protein (fimA).